The chain runs to 166 residues: MNIRQQITQFLSLAYVFSSAFMLWKTLSVIANSHSPIVVVLSGSMEPAFQRGDILFLWNRDHQQKVGDIVVYEIDGKSIPIVHRVLREHHNSEKQLLLTKGDNNAVDDLSLYAKKQQYLNQKQDLVGTVKGYLPFIGYVTILISENVYFKYGMLGLLGLSSLFSNE.

The Cytoplasmic segment spans residues 1–9 (MNIRQQITQ). The helical; Signal-anchor for type II membrane protein transmembrane segment at 10-30 (FLSLAYVFSSAFMLWKTLSVI) threads the bilayer. At 31–166 (ANSHSPIVVV…LGLSSLFSNE (136 aa)) the chain is on the lumenal side. Residues S44, H83, and D108 each act as charge relay system in the active site. The tract at residues 152-163 (GMLGLLGLSSLF) is C-terminal short (CTS) helix.

The protein belongs to the peptidase S26B family. In terms of assembly, component of the signal peptidase complex (SPC) composed of a catalytic subunit SEC11 and three accessory subunits SPC1, SPC2 and SPC3. The complex induces a local thinning of the ER membrane which is used to measure the length of the signal peptide (SP) h-region of protein substrates. This ensures the selectivity of the complex towards h-regions shorter than 18-20 amino acids. SPC associates with the translocon complex.

It localises to the endoplasmic reticulum membrane. It carries out the reaction Cleavage of hydrophobic, N-terminal signal or leader sequences from secreted and periplasmic proteins.. Catalytic component of the signal peptidase complex (SPC) which catalyzes the cleavage of N-terminal signal sequences from nascent proteins as they are translocated into the lumen of the endoplasmic reticulum. Specifically cleaves N-terminal signal peptides that contain a hydrophobic alpha-helix (h-region) shorter than 18-20 amino acids. In Candida albicans (strain SC5314 / ATCC MYA-2876) (Yeast), this protein is Signal peptidase complex catalytic subunit SEC11 (SEC11).